Reading from the N-terminus, the 150-residue chain is 1,4-dihydroxy-2-naphthoyl-CoA hydrolase (150 aa).

The active site involves aspartate 19.

Belongs to the 4-hydroxybenzoyl-CoA thioesterase family. DHNA-CoA hydrolase subfamily.

It catalyses the reaction 1,4-dihydroxy-2-naphthoyl-CoA + H2O = 1,4-dihydroxy-2-naphthoate + CoA + H(+). It functions in the pathway cofactor biosynthesis; phylloquinone biosynthesis. It participates in quinol/quinone metabolism; 1,4-dihydroxy-2-naphthoate biosynthesis; 1,4-dihydroxy-2-naphthoate from chorismate: step 7/7. In terms of biological role, catalyzes the hydrolysis of 1,4-dihydroxy-2-naphthoyl-CoA (DHNA-CoA) to 1,4-dihydroxy-2-naphthoate (DHNA), a reaction involved in phylloquinone (vitamin K1) biosynthesis. In Prochlorococcus marinus (strain MIT 9515), this protein is 1,4-dihydroxy-2-naphthoyl-CoA hydrolase.